We begin with the raw amino-acid sequence, 685 residues long: Translation initiation factor IF-2 (685 aa).

The region spanning 185-354 is the tr-type G domain; the sequence is KRPPVVTVMG…LLTAEMQELK (170 aa). The G1 stretch occupies residues 194 to 201; the sequence is GHVDHGKT. GTP is bound at residue 194-201; the sequence is GHVDHGKT. The G2 stretch occupies residues 219–223; sequence GITQH. The interval 240 to 243 is G3; the sequence is DTPG. Residues 240–244 and 294–297 each bind GTP; these read DTPGH and NKMD. A G4 region spans residues 294 to 297; that stretch reads NKMD. The G5 stretch occupies residues 330 to 332; it reads SAH.

This sequence belongs to the TRAFAC class translation factor GTPase superfamily. Classic translation factor GTPase family. IF-2 subfamily.

Its subcellular location is the cytoplasm. One of the essential components for the initiation of protein synthesis. Protects formylmethionyl-tRNA from spontaneous hydrolysis and promotes its binding to the 30S ribosomal subunits. Also involved in the hydrolysis of GTP during the formation of the 70S ribosomal complex. The protein is Translation initiation factor IF-2 of Clostridium tetani (strain Massachusetts / E88).